Reading from the N-terminus, the 178-residue chain is Cytidylate kinase (178 aa).

7–15 serves as a coordination point for ATP; the sequence is GLPGTGTTT.

It belongs to the cytidylate kinase family. Type 2 subfamily.

The protein resides in the cytoplasm. The catalysed reaction is CMP + ATP = CDP + ADP. It catalyses the reaction dCMP + ATP = dCDP + ADP. This chain is Cytidylate kinase, found in Methanococcus maripaludis (strain C5 / ATCC BAA-1333).